The sequence spans 120 residues: Aspartate 1-decarboxylase (120 aa).

Serine 25 functions as the Schiff-base intermediate with substrate; via pyruvic acid in the catalytic mechanism. At serine 25 the chain carries Pyruvic acid (Ser). Residue threonine 57 coordinates substrate. Tyrosine 58 (proton donor) is an active-site residue. 73–75 is a binding site for substrate; that stretch reads GAA.

The protein belongs to the PanD family. As to quaternary structure, heterooctamer of four alpha and four beta subunits. Requires pyruvate as cofactor. In terms of processing, is synthesized initially as an inactive proenzyme, which is activated by self-cleavage at a specific serine bond to produce a beta-subunit with a hydroxyl group at its C-terminus and an alpha-subunit with a pyruvoyl group at its N-terminus.

The protein localises to the cytoplasm. The catalysed reaction is L-aspartate + H(+) = beta-alanine + CO2. Its pathway is cofactor biosynthesis; (R)-pantothenate biosynthesis; beta-alanine from L-aspartate: step 1/1. In terms of biological role, catalyzes the pyruvoyl-dependent decarboxylation of aspartate to produce beta-alanine. The polypeptide is Aspartate 1-decarboxylase (Deinococcus radiodurans (strain ATCC 13939 / DSM 20539 / JCM 16871 / CCUG 27074 / LMG 4051 / NBRC 15346 / NCIMB 9279 / VKM B-1422 / R1)).